Consider the following 154-residue polypeptide: Major allergen Dau c 1 (154 aa).

Belongs to the BetVI family. In terms of assembly, homodimer.

In Daucus carota (Wild carrot), this protein is Major allergen Dau c 1.